Reading from the N-terminus, the 270-residue chain is Protoheme IX farnesyltransferase (270 aa).

Transmembrane regions (helical) follow at residues 13 to 30, 33 to 53, 95 to 115, 129 to 149, 156 to 176, 207 to 227, and 249 to 269; these read LALL…LVPD, HATL…GSAL, LLVL…ALAW, LALA…WTLA, YRII…FWLF, LWLG…LMAP, and EATL…ALLL.

This sequence belongs to the UbiA prenyltransferase family. Protoheme IX farnesyltransferase subfamily.

It is found in the cell inner membrane. It catalyses the reaction heme b + (2E,6E)-farnesyl diphosphate + H2O = Fe(II)-heme o + diphosphate. It functions in the pathway porphyrin-containing compound metabolism; heme O biosynthesis; heme O from protoheme: step 1/1. Converts heme B (protoheme IX) to heme O by substitution of the vinyl group on carbon 2 of heme B porphyrin ring with a hydroxyethyl farnesyl side group. This chain is Protoheme IX farnesyltransferase, found in Geobacter sulfurreducens (strain ATCC 51573 / DSM 12127 / PCA).